The chain runs to 391 residues: Pyruvate dehydrogenase E1 component subunit beta-3, chloroplastic (391 aa).

Residues 1 to 35 (MATAAAASLQYALHGAASASAKPRSAAPGRSVRVV) constitute a chloroplast transit peptide. Glu-127 is a thiamine diphosphate binding site. Residues Ile-180, Ala-228, Ile-229, and Asn-233 each coordinate K(+).

Tetramer of 2 alpha and 2 beta subunits. The cofactor is thiamine diphosphate.

The protein localises to the plastid. The protein resides in the chloroplast. The enzyme catalyses N(6)-[(R)-lipoyl]-L-lysyl-[protein] + pyruvate + H(+) = N(6)-[(R)-S(8)-acetyldihydrolipoyl]-L-lysyl-[protein] + CO2. In terms of biological role, the pyruvate dehydrogenase complex catalyzes the overall conversion of pyruvate to acetyl-CoA and CO(2). It contains multiple copies of three enzymatic components: pyruvate dehydrogenase (E1), dihydrolipoamide acetyltransferase (E2) and lipoamide dehydrogenase (E3). The polypeptide is Pyruvate dehydrogenase E1 component subunit beta-3, chloroplastic (Oryza sativa subsp. japonica (Rice)).